The following is a 160-amino-acid chain: Nucleotide-binding protein VSAL_I1728 (160 aa).

This sequence belongs to the YajQ family.

In terms of biological role, nucleotide-binding protein. In Aliivibrio salmonicida (strain LFI1238) (Vibrio salmonicida (strain LFI1238)), this protein is Nucleotide-binding protein VSAL_I1728.